A 157-amino-acid polypeptide reads, in one-letter code: SsrA-binding protein (157 aa).

Residues 133-157 (LHDKRESEKKRDWGREKGRLLRARG) form a disordered region. Residues 135 to 151 (DKRESEKKRDWGREKGR) show a composition bias toward basic and acidic residues.

The protein belongs to the SmpB family.

The protein resides in the cytoplasm. Required for rescue of stalled ribosomes mediated by trans-translation. Binds to transfer-messenger RNA (tmRNA), required for stable association of tmRNA with ribosomes. tmRNA and SmpB together mimic tRNA shape, replacing the anticodon stem-loop with SmpB. tmRNA is encoded by the ssrA gene; the 2 termini fold to resemble tRNA(Ala) and it encodes a 'tag peptide', a short internal open reading frame. During trans-translation Ala-aminoacylated tmRNA acts like a tRNA, entering the A-site of stalled ribosomes, displacing the stalled mRNA. The ribosome then switches to translate the ORF on the tmRNA; the nascent peptide is terminated with the 'tag peptide' encoded by the tmRNA and targeted for degradation. The ribosome is freed to recommence translation, which seems to be the essential function of trans-translation. The chain is SsrA-binding protein from Bradyrhizobium sp. (strain ORS 278).